The sequence spans 187 residues: Putative carbonic anhydrase YtiB (187 aa).

Zn(2+) contacts are provided by C38, D40, H96, and C99.

Belongs to the beta-class carbonic anhydrase family. Requires Zn(2+) as cofactor.

It carries out the reaction hydrogencarbonate + H(+) = CO2 + H2O. Its function is as follows. Reversible hydration of carbon dioxide. The protein is Putative carbonic anhydrase YtiB (ytiB) of Bacillus subtilis (strain 168).